Here is a 160-residue protein sequence, read N- to C-terminus: SsrA-binding protein (160 aa).

The protein belongs to the SmpB family.

Its subcellular location is the cytoplasm. In terms of biological role, required for rescue of stalled ribosomes mediated by trans-translation. Binds to transfer-messenger RNA (tmRNA), required for stable association of tmRNA with ribosomes. tmRNA and SmpB together mimic tRNA shape, replacing the anticodon stem-loop with SmpB. tmRNA is encoded by the ssrA gene; the 2 termini fold to resemble tRNA(Ala) and it encodes a 'tag peptide', a short internal open reading frame. During trans-translation Ala-aminoacylated tmRNA acts like a tRNA, entering the A-site of stalled ribosomes, displacing the stalled mRNA. The ribosome then switches to translate the ORF on the tmRNA; the nascent peptide is terminated with the 'tag peptide' encoded by the tmRNA and targeted for degradation. The ribosome is freed to recommence translation, which seems to be the essential function of trans-translation. This chain is SsrA-binding protein, found in Yersinia pseudotuberculosis serotype O:1b (strain IP 31758).